A 268-amino-acid chain; its full sequence is Orotidine 5'-phosphate decarboxylase (268 aa).

Substrate is bound by residues D38, 60 to 62, 92 to 101, Y218, and R236; these read KTH and DRKFADIGNT. The active-site Proton donor is K94.

The protein belongs to the OMP decarboxylase family.

It carries out the reaction orotidine 5'-phosphate + H(+) = UMP + CO2. It participates in pyrimidine metabolism; UMP biosynthesis via de novo pathway; UMP from orotate: step 2/2. In Candida parapsilosis (Yeast), this protein is Orotidine 5'-phosphate decarboxylase (URA3).